Consider the following 388-residue polypeptide: Gastricsin (388 aa).

A signal peptide spans 1–16 (MKWLLVALVCLHLLEA). Positions 17-59 (AVIKVPLRKFKSIRETLKEKGLLKEFLNTHKYDPALKYRFGDF) are cleaved as a propeptide — activation peptide. A Peptidase A1 domain is found at 73–385 (YFGEISIGTP…DMANNRVGFA (313 aa)). Asp-91 is a catalytic residue. Disulfide bonds link Cys-104/Cys-109 and Cys-267/Cys-271. Asp-276 is an active-site residue. Cys-310 and Cys-343 are oxidised to a cystine.

Belongs to the peptidase A1 family.

The protein localises to the secreted. It carries out the reaction More restricted specificity than pepsin A, but shows preferential cleavage at Tyr-|-Xaa bonds. High activity on hemoglobin.. Hydrolyzes a variety of proteins. The polypeptide is Gastricsin (PGC) (Oryctolagus cuniculus (Rabbit)).